The chain runs to 85 residues: Putative membrane protein insertion efficiency factor (85 aa).

The protein belongs to the UPF0161 family.

The protein localises to the cell inner membrane. Could be involved in insertion of integral membrane proteins into the membrane. This Shewanella woodyi (strain ATCC 51908 / MS32) protein is Putative membrane protein insertion efficiency factor.